The following is a 121-amino-acid chain: Large ribosomal subunit protein bL12 (121 aa).

The protein belongs to the bacterial ribosomal protein bL12 family. As to quaternary structure, homodimer. Part of the ribosomal stalk of the 50S ribosomal subunit. Forms a multimeric L10(L12)X complex, where L10 forms an elongated spine to which 2 to 4 L12 dimers bind in a sequential fashion. Binds GTP-bound translation factors.

Forms part of the ribosomal stalk which helps the ribosome interact with GTP-bound translation factors. Is thus essential for accurate translation. The sequence is that of Large ribosomal subunit protein bL12 from Aeromonas hydrophila subsp. hydrophila (strain ATCC 7966 / DSM 30187 / BCRC 13018 / CCUG 14551 / JCM 1027 / KCTC 2358 / NCIMB 9240 / NCTC 8049).